Here is a 526-residue protein sequence, read N- to C-terminus: Peptide chain release factor 3 (526 aa).

In terms of domain architecture, tr-type G spans 8-277; the sequence is NKRRTFAIIS…GLTQWAPAPQ (270 aa). Residues 17 to 24, 85 to 89, and 139 to 142 each bind GTP; these read SHPDAGKT, DTPGH, and NKLD.

Belongs to the TRAFAC class translation factor GTPase superfamily. Classic translation factor GTPase family. PrfC subfamily.

It is found in the cytoplasm. In terms of biological role, increases the formation of ribosomal termination complexes and stimulates activities of RF-1 and RF-2. It binds guanine nucleotides and has strong preference for UGA stop codons. It may interact directly with the ribosome. The stimulation of RF-1 and RF-2 is significantly reduced by GTP and GDP, but not by GMP. The sequence is that of Peptide chain release factor 3 from Histophilus somni (strain 2336) (Haemophilus somnus).